We begin with the raw amino-acid sequence, 164 residues long: 17.8 kDa heat shock protein (164 aa).

Residues 20 to 154 (VVAGEARPPM…HAGNGKAAGD (135 aa)) form the sHSP domain. Residues 68 to 93 (GEHEDANNAAKAGKASGEEEEENDGV) form a disordered region.

It belongs to the small heat shock protein (HSP20) family. May form oligomeric structures.

The protein localises to the cytoplasm. The sequence is that of 17.8 kDa heat shock protein (HSP17.8) from Oryza sativa subsp. japonica (Rice).